The following is a 976-amino-acid chain: Vacuolar membrane protease (976 aa).

The Cytoplasmic segment spans residues 1–15 (MKLKSVFRSVLKYRK). The helical transmembrane segment at 16–36 (TNLSLLLLITYSIITLLYIFD) threads the bilayer. At 37 to 359 (HERYKLNLPK…KFFVISAKTL (323 aa)) the chain is on the vacuolar side. Asn96 and Asn121 each carry an N-linked (GlcNAc...) asparagine glycan. The Zn(2+) site is built by His156 and Asp168. A glycan (N-linked (GlcNAc...) asparagine) is linked at Asn189. Residue Glu200 is the Proton acceptor of the active site. Glu201 contacts Zn(2+). Residues Asn212 and Asn217 are each glycosylated (N-linked (GlcNAc...) asparagine). Zn(2+) contacts are provided by Glu226 and His300. Residues 360–380 (FYWNCIFLLVSPVVAIGLYLI) traverse the membrane as a helical segment. Residues 381–392 (SRDRMTWKSHSW) are Cytoplasmic-facing. A helical transmembrane segment spans residues 393–412 (LSWTRFPLSLAAGIIVQKLF). Over 413–428 (SNDIIRSNPLTFSRNY) the chain is Vacuolar. A helical membrane pass occupies residues 429-449 (FWPISAFFTQVIFTSYVLINC). Residues 450-461 (SNFFFPCADMKS) lie on the Cytoplasmic side of the membrane. The chain crosses the membrane as a helical span at residues 462–482 (LSIIELFIILWTILLFTSKLL). The Vacuolar segment spans residues 483–496 (YSSDYRYTGLYPLS). The helical transmembrane segment at 497 to 517 (IFFLLSTIAAILRLLALALGM) threads the bilayer. Residues 518 to 627 (RTRKRLGREC…NSLKLEYTDY (110 aa)) lie on the Cytoplasmic side of the membrane. The tract at residues 528–610 (RDHHSNYSSH…PLLKGSNSME (83 aa)) is disordered. Residues 549–558 (NLEQPQDQFT) show a composition bias toward polar residues. Residues 559-570 (SSQDDQASIQDD) are compositionally biased toward low complexity. Residues 582-601 (NVDEDHGMDSSSQQHDERVP) are compositionally biased toward basic and acidic residues. A helical transmembrane segment spans residues 628 to 648 (AWIIQFLLIVPIPSFILFNSV). Residues 649–668 (DVIMDALNHTVQEGSKATFD) lie on the Vacuolar side of the membrane. Asn656 is a glycosylation site (N-linked (GlcNAc...) asparagine). The helical transmembrane segment at 669-689 (VLRFGMVGSILIALPILPFFY) threads the bilayer. The Cytoplasmic segment spans residues 690–692 (KVN). The helical transmembrane segment at 693 to 713 (YITISLTALLFLISASKTLLV) threads the bilayer. Over 714–976 (HPFTNSNPLK…LVIVKDAIIL (263 aa)) the chain is Vacuolar. Asn768, Asn796, Asn811, Asn866, and Asn937 each carry an N-linked (GlcNAc...) asparagine glycan.

This sequence belongs to the peptidase M28 family. It depends on Zn(2+) as a cofactor.

It localises to the vacuole membrane. May be involved in vacuolar sorting and osmoregulation. This is Vacuolar membrane protease from Saccharomyces cerevisiae (strain JAY291) (Baker's yeast).